Reading from the N-terminus, the 291-residue chain is Formamidopyrimidine-DNA glycosylase (291 aa).

Pro2 serves as the catalytic Schiff-base intermediate with DNA. Residue Glu3 is the Proton donor of the active site. Catalysis depends on Lys58, which acts as the Proton donor; for beta-elimination activity. Positions 100, 123, and 166 each coordinate DNA. The FPG-type zinc-finger motif lies at 257-291 (SVYGREGKECFQCGIPITRISQSGRSSFYCSQCQK). Residue Arg281 is the Proton donor; for delta-elimination activity of the active site.

This sequence belongs to the FPG family. Monomer. Zn(2+) serves as cofactor.

It catalyses the reaction Hydrolysis of DNA containing ring-opened 7-methylguanine residues, releasing 2,6-diamino-4-hydroxy-5-(N-methyl)formamidopyrimidine.. The enzyme catalyses 2'-deoxyribonucleotide-(2'-deoxyribose 5'-phosphate)-2'-deoxyribonucleotide-DNA = a 3'-end 2'-deoxyribonucleotide-(2,3-dehydro-2,3-deoxyribose 5'-phosphate)-DNA + a 5'-end 5'-phospho-2'-deoxyribonucleoside-DNA + H(+). Involved in base excision repair of DNA damaged by oxidation or by mutagenic agents. Acts as a DNA glycosylase that recognizes and removes damaged bases. Has a preference for oxidized purines, such as 7,8-dihydro-8-oxoguanine (8-oxoG). Has AP (apurinic/apyrimidinic) lyase activity and introduces nicks in the DNA strand. Cleaves the DNA backbone by beta-delta elimination to generate a single-strand break at the site of the removed base with both 3'- and 5'-phosphates. This chain is Formamidopyrimidine-DNA glycosylase, found in Bartonella quintana (strain Toulouse) (Rochalimaea quintana).